The primary structure comprises 360 residues: UPF0324 membrane protein plu2856 (360 aa).

9 helical membrane-spanning segments follow: residues 20 to 42, 47 to 69, 104 to 126, 136 to 155, 167 to 189, 239 to 256, 277 to 299, 304 to 326, and 333 to 355; these read LIPG…NIPW, GLGT…YPLL, VGIT…AIWL, QTVI…AIMA, VAVA…PWFY, MIRV…SRYI, WFAV…AAIV, NIDT…VSAI, and PILL…NLGI.

The protein belongs to the UPF0324 family.

The protein resides in the cell membrane. This Photorhabdus laumondii subsp. laumondii (strain DSM 15139 / CIP 105565 / TT01) (Photorhabdus luminescens subsp. laumondii) protein is UPF0324 membrane protein plu2856.